Reading from the N-terminus, the 247-residue chain is MAGHSKWANIKHRKAAQDAKRGKMFTKMIREITTAARLGGPDGGSNPRLRAAVAAALSINMTRDTVDRAIKRGAGGDDGVELETLVYEGYGPSGTAVMVECMTDNRNRTVAGVRHAFSKSGGALGTDGSVAYLFTKKGILSFTSADEDALMEAALEAGADDVETNDDGSIDVYTSPNDFGTVLDALEAAGFKPDNANVSMIPSTEVDLNADDAPKLLRLIDMLEDLDDVQEVYHNGTISDEVAATLE.

The disordered stretch occupies residues 1 to 21; that stretch reads MAGHSKWANIKHRKAAQDAKR.

Belongs to the TACO1 family.

Its subcellular location is the cytoplasm. The chain is Probable transcriptional regulatory protein Tola_2714 from Tolumonas auensis (strain DSM 9187 / NBRC 110442 / TA 4).